The chain runs to 303 residues: Elongation factor Ts (303 aa).

An involved in Mg(2+) ion dislocation from EF-Tu region spans residues 81–84 (TDFV).

It belongs to the EF-Ts family.

It localises to the cytoplasm. Functionally, associates with the EF-Tu.GDP complex and induces the exchange of GDP to GTP. It remains bound to the aminoacyl-tRNA.EF-Tu.GTP complex up to the GTP hydrolysis stage on the ribosome. The chain is Elongation factor Ts from Mesomycoplasma hyopneumoniae (strain J / ATCC 25934 / NCTC 10110) (Mycoplasma hyopneumoniae).